Here is an 858-residue protein sequence, read N- to C-terminus: Bifunctional uridylyltransferase/uridylyl-removing enzyme (858 aa).

Residues 1 to 324 (MSAHAAPSPE…PATSGITRVL (324 aa)) are uridylyltransferase. Positions 325-681 (SADRFVEKQG…ARPSPIGDAL (357 aa)) are uridylyl-removing. An HD domain is found at 443–565 (VDQHILMVLR…VGNERYLTAL (123 aa)). ACT domains follow at residues 682-763 (QVLV…PSKG) and 790-858 (ILSV…AIAV).

The protein belongs to the GlnD family. Mg(2+) is required as a cofactor.

It catalyses the reaction [protein-PII]-L-tyrosine + UTP = [protein-PII]-uridylyl-L-tyrosine + diphosphate. The enzyme catalyses [protein-PII]-uridylyl-L-tyrosine + H2O = [protein-PII]-L-tyrosine + UMP + H(+). Its activity is regulated as follows. Uridylyltransferase (UTase) activity is inhibited by glutamine, while glutamine activates uridylyl-removing (UR) activity. Modifies, by uridylylation and deuridylylation, the PII regulatory proteins (GlnB and homologs), in response to the nitrogen status of the cell that GlnD senses through the glutamine level. Under low glutamine levels, catalyzes the conversion of the PII proteins and UTP to PII-UMP and PPi, while under higher glutamine levels, GlnD hydrolyzes PII-UMP to PII and UMP (deuridylylation). Thus, controls uridylylation state and activity of the PII proteins, and plays an important role in the regulation of nitrogen assimilation and metabolism. The polypeptide is Bifunctional uridylyltransferase/uridylyl-removing enzyme (Burkholderia orbicola (strain AU 1054)).